The chain runs to 457 residues: Cyclic dof factor 2 (457 aa).

The tract at residues 1 to 130 (MADPAIKLFG…GGTACSQEGK (130 aa)) is disordered. Residues 22-35 (DSSSSYTGFLTETQ) show a composition bias toward polar residues. Acidic residues-rich tracts occupy residues 45–54 (TGDDDDEEMG) and 62–73 (EGDDVGDGGGES). Basic and acidic residues-rich tracts occupy residues 74-94 (ETDKKEEKDSECQEESLRNES) and 106-118 (EKTETTKAAKTNE). A Dof-type zinc finger spans residues 138–192 (LPCPRCNSMETKFCYYNNYNVNQPRHFCKKCQRYWTAGGTMRNVPVGAGRRKNKS). Positions 140, 143, 165, and 168 each coordinate Zn(2+). Disordered regions lie at residues 334–377 (QPNS…KSKP) and 417–457 (AFRS…HESS). A compositionally biased stretch (low complexity) spans 337–346 (SPSGSNPNSP).

Interacts with ADO2 (via kelch repeats) and ADO3 (via kelch repeats). Expressed in the vasculature of cotyledons and hypocotyls, leaves and roots.

Its subcellular location is the nucleus. Transcription factor that binds specifically to a 5'-AA[AG]G-3' consensus core sequence. Regulates a photoperiodic flowering response. Transcriptional repressor of 'CONSTANS' expression. The stability of CDF2 is controlled by 'GIGANTEA' and redundantly by ADO3, ADO2 and/or ADO1. The polypeptide is Cyclic dof factor 2 (CDF2) (Arabidopsis thaliana (Mouse-ear cress)).